The sequence spans 1434 residues: MPKSDDCFFSMDNLFFSSPDETENFPVKEKSLDWFLPPAPLISEIPDIQELEEEIESYKLLGKGKMPRMLTSNLKIINEDTNCISPTQKIHFSYNVHEQDYLNLGGSNNNDMSHVAGKLMYGSSQKYKNHMGAKSPSARSSPGDTKLHDVAEDRQGTSAFKKRLSRTCDSEHDCDYADGSLNLSSHISPVKLTQTKISKENAWTCSNSKQKRQYSTNKFKANDAFSASGIGKDIFKAPSFPAASQPHDIQGITPNGLGSLKAVTEIPAKFRNIFKEFPYFNYIQSKAFDDLLYTDRNFVICAPTGSGKTVVFELAITRLLMEVPLPWLNMKIVYMAPIKALCSQRFDDWKEKFGPVGLNCKELTGDTVMDDLFEIQHANIIITTPEKWDSVTRKWRDNSFIQLVRLFLIDEVHVIKDENRGPTLEVVVSRMKTVQSLSRDLESASPVPVRFVAVSATIPNAEDIAEWLSDGERPAVCLKMDESHRPVKLQKVVLGFPCSSSQTEFKFDLALNYKVYSVIRTYSDQKPTLVFCSTRKGVQQAASVLVKDAKFIISVEQKLRLQKSAYSIRDSKLKDTLVYGVGYHHAGMELSDRKLVEGLFTSGDLPVLFTTSTLAMGMNMPAHLVVIKSTMHYSGGVFEEYSETDILQMIGRAGRPQFDTTATAVIMTRLSTREKYVQMLACNDTVESSLHRHLIEHLNAEIVLHTITDVNIALDWIRSTMLYIRALKNPSHYGFSSGLNKDGIEAKLQELCLKNLKDLSSLDLIKMDEDVNFKPTEAGRLMAWYYITFETVKKFCAISGKETLLDLISMISSCNEFLDVQLRISEKRILNTLNKDPNRITIRFPMAERIKTREMKVNCLIQAQLGCIPIQDFALTQDTVKIFRNGSRIARWLSDFVAAQEKKFAVLLNSVILTKCFKCKLWENSKHVSKQLDKIGISLSNTMVNAGLTSFKKIEEANARELELILNRHPPFGTQIKEAVAHLPKYELEVEQIARYSDIKAEILVTIILRNFEQLQTKRTAPDFHYATLIIGDADNQVVFKHKIMDSVLLKSGNWVKKIDVKRALISEDLSINLISSDYVGLDIHQKFTVFYFGPRKFVNETAMERSSETDISHSDYSGRATATGSSKGMATCKKPGNRECHHHCKNKHACGHDCCKIGVAQKPEVKESAMSSYLSDLKSRDAVSSLPLAKRLKIQMNKSQNVDLKEFGFTPRPSLSSISRSEYLNTPELSILEQRNQHEIYGKVQQGPSEYRDKEVLGVNLELGNEVWDDFDDESLIEVMSLSADAEKMAASGFGDTRDSSLGGSKLPFQKSSSRFQRDNSNSFASSPGKPDAYLRDCSRSSFGLSSVAEIPQRAENASLANLQERRPLTLSPVIERMCFAHSKKTPQSPKFKEVDIFIGNSGSKKEIDLSKYYPDDAAEEMKALLGIFNGIF.

One can recognise a Helicase ATP-binding domain in the interval 289 to 476 (DDLLYTDRNF…WLSDGERPAV (188 aa)). 302-309 (APTGSGKT) provides a ligand contact to ATP. The DEAH box motif lies at 410-413 (DEVH). Residues 514-718 (KVYSVIRTYS…DVNIALDWIR (205 aa)) form the Helicase C-terminal domain. The region spanning 775-1089 (PTEAGRLMAW…VGLDIHQKFT (315 aa)) is the SEC63 domain. A disordered region spans residues 1110-1130 (TDISHSDYSGRATATGSSKGM). The segment at 1141-1156 (CHHHCKNKHACGHDCC) adopts a C4-type zinc-finger fold. Residues 1294 to 1333 (GFGDTRDSSLGGSKLPFQKSSSRFQRDNSNSFASSPGKPD) are disordered. The span at 1311 to 1327 (QKSSSRFQRDNSNSFAS) shows a compositional bias: polar residues.

Belongs to the helicase family. SKI2 subfamily. Zn(2+) serves as cofactor.

The enzyme catalyses Couples ATP hydrolysis with the unwinding of duplex DNA by translocating in the 3'-5' direction.. It carries out the reaction ATP + H2O = ADP + phosphate + H(+). Its function is as follows. Required for crossover formation and complete synapsis of homologous chromosomes during meiosis. The polypeptide is Probable ATP-dependent DNA helicase HFM1 (Mus musculus (Mouse)).